Here is a 351-residue protein sequence, read N- to C-terminus: Histidinol-phosphate aminotransferase (351 aa).

Position 213 is an N6-(pyridoxal phosphate)lysine (lysine 213).

It belongs to the class-II pyridoxal-phosphate-dependent aminotransferase family. Histidinol-phosphate aminotransferase subfamily. In terms of assembly, homodimer. Requires pyridoxal 5'-phosphate as cofactor.

The catalysed reaction is L-histidinol phosphate + 2-oxoglutarate = 3-(imidazol-4-yl)-2-oxopropyl phosphate + L-glutamate. The enzyme catalyses L-histidine + 2-oxoglutarate = 3-(imidazol-5-yl)pyruvate + L-glutamate. The protein operates within amino-acid biosynthesis; L-histidine biosynthesis; L-histidine from 5-phospho-alpha-D-ribose 1-diphosphate: step 7/9. This is Histidinol-phosphate aminotransferase from Caldanaerobacter subterraneus subsp. tengcongensis (strain DSM 15242 / JCM 11007 / NBRC 100824 / MB4) (Thermoanaerobacter tengcongensis).